The sequence spans 270 residues: Phosphatidylglycerol--prolipoprotein diacylglyceryl transferase (270 aa).

7 helical membrane passes run 10-30, 56-76, 92-112, 120-140, 174-194, 202-222, and 236-256; these read VALA…LIGI, LIFW…VLFY, WKGG…AWWF, FFQL…AGRI, PSQL…LYIF, MAVS…VEFV, and WVTM…GLLW. Arg139 is an a 1,2-diacyl-sn-glycero-3-phospho-(1'-sn-glycerol) binding site.

The protein belongs to the Lgt family.

The protein resides in the cell inner membrane. It catalyses the reaction L-cysteinyl-[prolipoprotein] + a 1,2-diacyl-sn-glycero-3-phospho-(1'-sn-glycerol) = an S-1,2-diacyl-sn-glyceryl-L-cysteinyl-[prolipoprotein] + sn-glycerol 1-phosphate + H(+). It functions in the pathway protein modification; lipoprotein biosynthesis (diacylglyceryl transfer). Its function is as follows. Catalyzes the transfer of the diacylglyceryl group from phosphatidylglycerol to the sulfhydryl group of the N-terminal cysteine of a prolipoprotein, the first step in the formation of mature lipoproteins. This Pseudomonas fluorescens (strain SBW25) protein is Phosphatidylglycerol--prolipoprotein diacylglyceryl transferase.